A 333-amino-acid polypeptide reads, in one-letter code: Autoinducer 2 import system permease protein LsrD (333 aa).

Helical transmembrane passes span 7–27 (YGWE…FGLS), 45–65 (ICIG…GIDI), 67–87 (FGST…AGVP), 90–110 (VAIP…AGLI), 118–138 (LVIT…LSGL), 162–182 (LFGL…FWLL), 212–232 (TLCM…ILLV), 240–260 (SDLG…GGAN), 261–281 (IYGG…VGYL), and 288–308 (IGTP…LVVV).

Belongs to the binding-protein-dependent transport system permease family. AraH/RbsC subfamily. As to quaternary structure, the complex is composed of two ATP-binding proteins (LsrA), two transmembrane proteins (LsrC and LsrD) and a solute-binding protein (LsrB).

It localises to the cell inner membrane. In terms of biological role, part of the ABC transporter complex LsrABCD involved in autoinducer 2 (AI-2) import. Probably responsible for the translocation of the substrate across the membrane. The chain is Autoinducer 2 import system permease protein LsrD (lsrD) from Yersinia pestis bv. Antiqua (strain Antiqua).